The following is a 100-amino-acid chain: Small ribosomal subunit protein bS6 (100 aa).

This sequence belongs to the bacterial ribosomal protein bS6 family.

Functionally, binds together with bS18 to 16S ribosomal RNA. The chain is Small ribosomal subunit protein bS6 from Enterococcus faecalis (strain ATCC 700802 / V583).